Consider the following 898-residue polypeptide: DNA mismatch repair protein MutS (898 aa).

Residue 646 to 653 coordinates ATP; that stretch reads GPNMGGKS.

Belongs to the DNA mismatch repair MutS family.

In terms of biological role, this protein is involved in the repair of mismatches in DNA. It is possible that it carries out the mismatch recognition step. This protein has a weak ATPase activity. This Brucella ovis (strain ATCC 25840 / 63/290 / NCTC 10512) protein is DNA mismatch repair protein MutS.